Consider the following 440-residue polypeptide: Glutamyl-tRNA reductase (440 aa).

Substrate contacts are provided by residues 47-50 (TCNR), serine 110, 115-117 (ERE), and glutamine 121. Residue cysteine 48 is the Nucleophile of the active site. NADP(+) is bound at residue 192-197 (GTGAYA).

It belongs to the glutamyl-tRNA reductase family. In terms of assembly, homodimer.

It catalyses the reaction (S)-4-amino-5-oxopentanoate + tRNA(Glu) + NADP(+) = L-glutamyl-tRNA(Glu) + NADPH + H(+). Its pathway is porphyrin-containing compound metabolism; protoporphyrin-IX biosynthesis; 5-aminolevulinate from L-glutamyl-tRNA(Glu): step 1/2. Its function is as follows. Catalyzes the NADPH-dependent reduction of glutamyl-tRNA(Glu) to glutamate 1-semialdehyde (GSA). The chain is Glutamyl-tRNA reductase from Paenarthrobacter aurescens (strain TC1).